The chain runs to 620 residues: 1-deoxy-D-xylulose-5-phosphate synthase (620 aa).

Thiamine diphosphate contacts are provided by residues histidine 80 and 121-123 (GHS). Aspartate 152 contributes to the Mg(2+) binding site. Thiamine diphosphate is bound by residues 153–154 (GA), asparagine 181, tyrosine 288, and glutamate 370. Asparagine 181 provides a ligand contact to Mg(2+).

This sequence belongs to the transketolase family. DXPS subfamily. In terms of assembly, homodimer. Mg(2+) is required as a cofactor. It depends on thiamine diphosphate as a cofactor.

It carries out the reaction D-glyceraldehyde 3-phosphate + pyruvate + H(+) = 1-deoxy-D-xylulose 5-phosphate + CO2. It participates in metabolic intermediate biosynthesis; 1-deoxy-D-xylulose 5-phosphate biosynthesis; 1-deoxy-D-xylulose 5-phosphate from D-glyceraldehyde 3-phosphate and pyruvate: step 1/1. Its function is as follows. Catalyzes the acyloin condensation reaction between C atoms 2 and 3 of pyruvate and glyceraldehyde 3-phosphate to yield 1-deoxy-D-xylulose-5-phosphate (DXP). The sequence is that of 1-deoxy-D-xylulose-5-phosphate synthase from Escherichia coli (strain 55989 / EAEC).